A 162-amino-acid chain; its full sequence is Cadmium metallothionein (162 aa).

The propeptide occupies 1-2 (MD).

Its function is as follows. The metallothioneins are involved in the cellular sequestration of toxic metal ions. The protein is Cadmium metallothionein (MTT1) of Tetrahymena thermophila.